A 547-amino-acid polypeptide reads, in one-letter code: Chaperonin GroEL 1 (547 aa).

ATP-binding positions include 30–33 (TLGP), K51, 87–91 (DGTTT), G415, and D496.

It belongs to the chaperonin (HSP60) family. Forms a cylinder of 14 subunits composed of two heptameric rings stacked back-to-back. Interacts with the co-chaperonin GroES.

It localises to the cytoplasm. It catalyses the reaction ATP + H2O + a folded polypeptide = ADP + phosphate + an unfolded polypeptide.. Together with its co-chaperonin GroES, plays an essential role in assisting protein folding. The GroEL-GroES system forms a nano-cage that allows encapsulation of the non-native substrate proteins and provides a physical environment optimized to promote and accelerate protein folding. The protein is Chaperonin GroEL 1 of Bradyrhizobium sp. (strain BTAi1 / ATCC BAA-1182).